The sequence spans 282 residues: Formamidopyrimidine-DNA glycosylase (282 aa).

The active-site Schiff-base intermediate with DNA is Pro2. Catalysis depends on Glu3, which acts as the Proton donor. Lys58 functions as the Proton donor; for beta-elimination activity in the catalytic mechanism. DNA contacts are provided by His96, Arg115, and Lys152. The FPG-type zinc-finger motif lies at 238–272; it reads HVYGRGGQPCERCGEEILKTVLGGRGTHYCPSCQN. The Proton donor; for delta-elimination activity role is filled by Arg262.

This sequence belongs to the FPG family. In terms of assembly, monomer. Zn(2+) is required as a cofactor.

It carries out the reaction Hydrolysis of DNA containing ring-opened 7-methylguanine residues, releasing 2,6-diamino-4-hydroxy-5-(N-methyl)formamidopyrimidine.. It catalyses the reaction 2'-deoxyribonucleotide-(2'-deoxyribose 5'-phosphate)-2'-deoxyribonucleotide-DNA = a 3'-end 2'-deoxyribonucleotide-(2,3-dehydro-2,3-deoxyribose 5'-phosphate)-DNA + a 5'-end 5'-phospho-2'-deoxyribonucleoside-DNA + H(+). In terms of biological role, involved in base excision repair of DNA damaged by oxidation or by mutagenic agents. Acts as a DNA glycosylase that recognizes and removes damaged bases. Has a preference for oxidized purines, such as 7,8-dihydro-8-oxoguanine (8-oxoG). Has AP (apurinic/apyrimidinic) lyase activity and introduces nicks in the DNA strand. Cleaves the DNA backbone by beta-delta elimination to generate a single-strand break at the site of the removed base with both 3'- and 5'-phosphates. The sequence is that of Formamidopyrimidine-DNA glycosylase from Corynebacterium aurimucosum (strain ATCC 700975 / DSM 44827 / CIP 107346 / CN-1) (Corynebacterium nigricans).